The primary structure comprises 638 residues: E3 ubiquitin-protein ligase TRIM47 (638 aa).

The residue at position 1 (M1) is an N-acetylmethionine. The RING-type zinc finger occupies 9–58 (CPICLEPLREPVTLPCGHNFCLACLGALWPHRGASGAGGPGGAARCPLCQ). T72 bears the Phosphothreonine mark. Residues 79–119 (LRQGSGPGSGPGPAPALAPEPSAPSALPSVPEPSAPCAPEP) form a disordered region. Pro residues-rich tracts occupy residues 88–100 (GPGP…PEPS) and 108–119 (VPEPSAPCAPEP). The segment at 177-217 (LEESLCPRHLRPLERYCRAERVCLCEACAAQEHRGHELVPL) adopts a B box-type zinc-finger fold. Zn(2+) contacts are provided by C182, H185, C204, and H209. A coiled-coil region spans residues 296-324 (MLGRSQGDLRRQEEQRSRLSRARQNLSQV). 2 disordered regions span residues 300–322 (SQGD…QNLS) and 384–411 (LRGP…LEST). Residues 302–312 (GDLRRQEEQRS) show a composition bias toward basic and acidic residues. A B30.2/SPRY domain is found at 410-631 (STNLLESEAP…LQIGPLKKSC (222 aa)). Position 461 is a phosphoserine (S461). An Omega-N-methylarginine modification is found at R582. Position 588 is a phosphoserine (S588).

The protein belongs to the TRIM/RBCC family. As to expression, low expression in most tissues. Higher expression in kidney tubular cells. Overexpressed in astrocytoma tumor cells.

Its subcellular location is the cytoplasm. The protein localises to the nucleus. The catalysed reaction is S-ubiquitinyl-[E2 ubiquitin-conjugating enzyme]-L-cysteine + [acceptor protein]-L-lysine = [E2 ubiquitin-conjugating enzyme]-L-cysteine + N(6)-ubiquitinyl-[acceptor protein]-L-lysine.. It participates in protein modification; protein ubiquitination. Its function is as follows. E3 ubiquitin-protein ligase that mediates the ubiquitination and proteasomal degradation of CYLD. The polypeptide is E3 ubiquitin-protein ligase TRIM47 (Homo sapiens (Human)).